We begin with the raw amino-acid sequence, 553 residues long: CTP synthase (553 aa).

The interval 1–270 is amidoligase domain; that stretch reads MTKYVFVTGG…DRLICEELRL (270 aa). Ser13 contacts CTP. A UTP-binding site is contributed by Ser13. ATP is bound by residues 14–19 and Asp71; that span reads SLGKGI. Residues Asp71 and Glu144 each coordinate Mg(2+). Residues 151–153, 191–196, and Lys227 each bind CTP; these read DIE and KTKPTQ. UTP contacts are provided by residues 191–196 and Lys227; that span reads KTKPTQ. A Glutamine amidotransferase type-1 domain is found at 295-547; it reads TIGMVGKYVD…VQAALACQQT (253 aa). An L-glutamine-binding site is contributed by Gly356. The active-site Nucleophile; for glutamine hydrolysis is Cys383. L-glutamine-binding positions include 384-387, Glu407, and Arg473; that span reads LGMQ. Active-site residues include His520 and Glu522.

It belongs to the CTP synthase family. Homotetramer.

It carries out the reaction UTP + L-glutamine + ATP + H2O = CTP + L-glutamate + ADP + phosphate + 2 H(+). The enzyme catalyses L-glutamine + H2O = L-glutamate + NH4(+). It catalyses the reaction UTP + NH4(+) + ATP = CTP + ADP + phosphate + 2 H(+). Its pathway is pyrimidine metabolism; CTP biosynthesis via de novo pathway; CTP from UDP: step 2/2. With respect to regulation, allosterically activated by GTP, when glutamine is the substrate; GTP has no effect on the reaction when ammonia is the substrate. The allosteric effector GTP functions by stabilizing the protein conformation that binds the tetrahedral intermediate(s) formed during glutamine hydrolysis. Inhibited by the product CTP, via allosteric rather than competitive inhibition. In terms of biological role, catalyzes the ATP-dependent amination of UTP to CTP with either L-glutamine or ammonia as the source of nitrogen. Regulates intracellular CTP levels through interactions with the four ribonucleotide triphosphates. The chain is CTP synthase from Burkholderia mallei (strain NCTC 10229).